Consider the following 303-residue polypeptide: DnaJ homolog subfamily C member 17 (303 aa).

Positions aspartate 11–arginine 76 constitute a J domain. Disordered regions lie at residues glutamate 104–threonine 123 and isoleucine 150–threonine 170. Residue serine 112 is modified to Phosphoserine. Over residues isoleucine 150–glutamate 166 the composition is skewed to basic and acidic residues. One can recognise an RRM domain in the interval lysine 178–glycine 249. Residue lysine 264 is modified to N6-methyllysine.

In terms of tissue distribution, expressed in the thyroid gland.

Its subcellular location is the cytoplasm. The protein resides in the nucleus. May negatively affect PAX8-induced thyroglobulin/TG transcription. The polypeptide is DnaJ homolog subfamily C member 17 (Dnajc17) (Mus musculus (Mouse)).